We begin with the raw amino-acid sequence, 364 residues long: UDP-arabinopyranose mutase 1 (364 aa).

The DXD motif signature appears at 110 to 112; that stretch reads DDD. Arginine 158 carries N-linked (Glc...) arginine glycosylation.

This sequence belongs to the RGP family. As to quaternary structure, heteromers with UAM2 and UAM3. Mn(2+) is required as a cofactor. Requires Mg(2+) as cofactor. Reversibly glycosylated in vitro at Arg-158 by UDP-glucose. Reversibly glycosylated by UDP-xylose and UDP-galactose.

It is found in the golgi apparatus. It carries out the reaction UDP-beta-L-arabinofuranose = UDP-beta-L-arabinopyranose. Its function is as follows. UDP-L-arabinose mutase involved in the biosynthesis of cell wall non-cellulosic polysaccharides. Catalyzes the interconvertion of UDP-L-arabinopyranose (UDP-Arap) and UDP-L-arabinofuranose (UDP-Araf). Preferentially catalyzes the formation of UDP-Arap from UDP-Araf. At thermodynamic equilibrium in vitro the ratio of the pyranose form over the furanose form is 90:10. Is probably active as heteromer in vivo. This Oryza sativa subsp. japonica (Rice) protein is UDP-arabinopyranose mutase 1.